The following is a 240-amino-acid chain: MKERDSRNQIGDLPFRVKEGFSVYEFIEQLYEANVVERINRFLVKVTFNGKEFLAHLHDPGRLKDLIYPGNLVLIRETKGYKTKFSITAAYSNSRFVVLDSRLHNIIASKFLPEAYEKEIKVGNSRIDFKYDNTYLEVKGCTLVENEIAYFPDAPTERGRRHLKELRELMKKGFNAILLILVMRDDAKCFLPNEKTDPKFSIEFWNSIKEGLNVNIKTFKLVGNKIIYVRDIPLCKTNLT.

The protein belongs to the SfsA family.

The sequence is that of Sugar fermentation stimulation protein homolog from Saccharolobus islandicus (strain M.16.4 / Kamchatka #3) (Sulfolobus islandicus).